The following is a 179-amino-acid chain: tRNA-splicing endonuclease (179 aa).

Active-site residues include tyrosine 115, histidine 125, and lysine 156.

It belongs to the tRNA-intron endonuclease family. Archaeal short subfamily. As to quaternary structure, homotetramer; although the tetramer contains four active sites, only two participate in the cleavage. Therefore, it should be considered as a dimer of dimers.

It catalyses the reaction pretRNA = a 3'-half-tRNA molecule with a 5'-OH end + a 5'-half-tRNA molecule with a 2',3'-cyclic phosphate end + an intron with a 2',3'-cyclic phosphate and a 5'-hydroxyl terminus.. Endonuclease that removes tRNA introns. Cleaves pre-tRNA at the 5'- and 3'-splice sites to release the intron. The products are an intron and two tRNA half-molecules bearing 2',3' cyclic phosphate and 5'-OH termini. Recognizes a pseudosymmetric substrate in which 2 bulged loops of 3 bases are separated by a stem of 4 bp. The sequence is that of tRNA-splicing endonuclease (endA) from Methanocaldococcus jannaschii (strain ATCC 43067 / DSM 2661 / JAL-1 / JCM 10045 / NBRC 100440) (Methanococcus jannaschii).